Reading from the N-terminus, the 251-residue chain is MDDSSSLASPVQSILAAARRRDPPTRRCTVSARSLPAALHSAAADGRTPIIAEVKPTSPTTDTEHSGDPAELAREMVAGGAAAVSVLTEPHHFDGSTDALRAIRDAVDVPVLRKDFLLTEPQLDAVAADAVLLIARFLGDDLGDMLAAARDRGFQALVEVHSPRELARAVDADADIIGVNNRDLTALTVDLDTFGAVAPEAPADVTLVAESGIATPTDARTMRAAGADGLLVGSAIMDGPVRDTTRRLVTA.

A compositionally biased stretch (polar residues) spans 1-12 (MDDSSSLASPVQ). The disordered stretch occupies residues 1–27 (MDDSSSLASPVQSILAAARRRDPPTRR).

The protein belongs to the TrpC family.

The enzyme catalyses 1-(2-carboxyphenylamino)-1-deoxy-D-ribulose 5-phosphate + H(+) = (1S,2R)-1-C-(indol-3-yl)glycerol 3-phosphate + CO2 + H2O. The protein operates within amino-acid biosynthesis; L-tryptophan biosynthesis; L-tryptophan from chorismate: step 4/5. The protein is Indole-3-glycerol phosphate synthase of Halobacterium salinarum (strain ATCC 700922 / JCM 11081 / NRC-1) (Halobacterium halobium).